Consider the following 1011-residue polypeptide: DNA-directed RNA polymerase 2, chloroplastic/mitochondrial (1011 aa).

Residues 307–326 (KGDDNEESGGVENETSMKEQ) form a disordered region. Catalysis depends on residues Asp712, Lys787, and Asp944.

This sequence belongs to the phage and mitochondrial RNA polymerase family. Interacts with NIP1 and NIP2.

Its subcellular location is the plastid. The protein localises to the chloroplast. It localises to the mitochondrion. The enzyme catalyses RNA(n) + a ribonucleoside 5'-triphosphate = RNA(n+1) + diphosphate. Its function is as follows. DNA-dependent RNA polymerase catalyzes the transcription of DNA into RNA using the four ribonucleoside triphosphates as substrates. In Arabidopsis thaliana (Mouse-ear cress), this protein is DNA-directed RNA polymerase 2, chloroplastic/mitochondrial (RPOT2).